The sequence spans 197 residues: dTTP/UTP pyrophosphatase (197 aa).

Aspartate 70 serves as the catalytic Proton acceptor.

This sequence belongs to the Maf family. YhdE subfamily. The cofactor is a divalent metal cation.

Its subcellular location is the cytoplasm. The catalysed reaction is dTTP + H2O = dTMP + diphosphate + H(+). The enzyme catalyses UTP + H2O = UMP + diphosphate + H(+). In terms of biological role, nucleoside triphosphate pyrophosphatase that hydrolyzes dTTP and UTP. May have a dual role in cell division arrest and in preventing the incorporation of modified nucleotides into cellular nucleic acids. The polypeptide is dTTP/UTP pyrophosphatase (yceF2) (Escherichia coli O6:K15:H31 (strain 536 / UPEC)).